The chain runs to 236 residues: Chorionic somatomammotropin hormone (236 aa).

Positions 1–36 (MAPASSHREHQWTCNLVRGSRLLLLLVVSNLILCQG) are cleaved as a signal peptide. 3 disulfides stabilise this stretch: cysteine 44–cysteine 51, cysteine 97–cysteine 212, and cysteine 229–cysteine 234.

The protein belongs to the somatotropin/prolactin family.

The protein resides in the secreted. The protein is Chorionic somatomammotropin hormone (CSH) of Ovis aries (Sheep).